A 251-amino-acid chain; its full sequence is 2,3-bisphosphoglycerate-dependent phosphoglycerate mutase (251 aa).

Substrate is bound by residues 8–15 (RHGESLWN), 21–22 (TG), Arg-60, 87–90 (ERHY), Lys-98, 114–115 (RR), and 183–184 (GN). His-9 serves as the catalytic Tele-phosphohistidine intermediate. Glu-87 acts as the Proton donor/acceptor in catalysis.

The protein belongs to the phosphoglycerate mutase family. BPG-dependent PGAM subfamily.

It carries out the reaction (2R)-2-phosphoglycerate = (2R)-3-phosphoglycerate. The protein operates within carbohydrate degradation; glycolysis; pyruvate from D-glyceraldehyde 3-phosphate: step 3/5. Its function is as follows. Catalyzes the interconversion of 2-phosphoglycerate and 3-phosphoglycerate. In Thermoanaerobacter sp. (strain X514), this protein is 2,3-bisphosphoglycerate-dependent phosphoglycerate mutase.